We begin with the raw amino-acid sequence, 417 residues long: Peptide chain release factor subunit 1 (417 aa).

This sequence belongs to the eukaryotic release factor 1 family. In terms of assembly, heterodimer of two subunits, one of which binds GTP.

It is found in the cytoplasm. Functionally, directs the termination of nascent peptide synthesis (translation) in response to the termination codons UAA, UAG and UGA. This Thermoplasma acidophilum (strain ATCC 25905 / DSM 1728 / JCM 9062 / NBRC 15155 / AMRC-C165) protein is Peptide chain release factor subunit 1 (prf1).